Here is a 150-residue protein sequence, read N- to C-terminus: Cytochrome c-type biogenesis protein CcmE (150 aa).

Topologically, residues 1 to 7 are cytoplasmic; sequence MTRKQKR. Residues 8 to 28 form a helical; Signal-anchor for type II membrane protein membrane-spanning segment; it reads LAIIGGGVGFLTAAVLLVMFA. Residues 29–150 are Periplasmic-facing; sequence FSQAVAYFYV…VTLGGEENIR (122 aa). Residues His-123 and Tyr-127 each coordinate heme.

It belongs to the CcmE/CycJ family.

Its subcellular location is the cell inner membrane. Heme chaperone required for the biogenesis of c-type cytochromes. Transiently binds heme delivered by CcmC and transfers the heme to apo-cytochromes in a process facilitated by CcmF and CcmH. This chain is Cytochrome c-type biogenesis protein CcmE, found in Sinorhizobium medicae (strain WSM419) (Ensifer medicae).